The following is a 228-amino-acid chain: UPF0173 metal-dependent hydrolase ABC2731 (228 aa).

The protein belongs to the UPF0173 family.

In Shouchella clausii (strain KSM-K16) (Alkalihalobacillus clausii), this protein is UPF0173 metal-dependent hydrolase ABC2731.